The sequence spans 419 residues: S-adenosylmethionine synthase (419 aa).

An ATP-binding site is contributed by His15. Mg(2+) is bound at residue Asp17. Glu43 is a K(+) binding site. 2 residues coordinate L-methionine: Glu56 and Gln100. Residues 100 to 110 (QSPDIAQGVNE) form a flexible loop region. ATP contacts are provided by residues 171-173 (DGK), 248-249 (KF), Asp257, 263-264 (RK), Ala280, and Lys284. An L-methionine-binding site is contributed by Asp257. Lys288 is a binding site for L-methionine.

This sequence belongs to the AdoMet synthase family. Homotetramer; dimer of dimers. Mg(2+) serves as cofactor. It depends on K(+) as a cofactor.

Its subcellular location is the cytoplasm. The enzyme catalyses L-methionine + ATP + H2O = S-adenosyl-L-methionine + phosphate + diphosphate. It functions in the pathway amino-acid biosynthesis; S-adenosyl-L-methionine biosynthesis; S-adenosyl-L-methionine from L-methionine: step 1/1. In terms of biological role, catalyzes the formation of S-adenosylmethionine (AdoMet) from methionine and ATP. The overall synthetic reaction is composed of two sequential steps, AdoMet formation and the subsequent tripolyphosphate hydrolysis which occurs prior to release of AdoMet from the enzyme. The polypeptide is S-adenosylmethionine synthase (Prochlorococcus marinus (strain MIT 9303)).